The following is a 478-amino-acid chain: tRNA-2-methylthio-N(6)-dimethylallyladenosine synthase (478 aa).

An MTTase N-terminal domain is found at 39–157 (KLVFTQTFGC…FPQLLTESIN (119 aa)). Positions 48, 84, 118, 194, 198, and 201 each coordinate [4Fe-4S] cluster. The Radical SAM core domain maps to 180 to 410 (RKFELKAFVN…LEAVNRISAE (231 aa)). In terms of domain architecture, TRAM spans 410-477 (EINDGYKDRI…TFSLNGILVN (68 aa)).

It belongs to the methylthiotransferase family. MiaB subfamily. As to quaternary structure, monomer. The cofactor is [4Fe-4S] cluster.

It localises to the cytoplasm. The enzyme catalyses N(6)-dimethylallyladenosine(37) in tRNA + (sulfur carrier)-SH + AH2 + 2 S-adenosyl-L-methionine = 2-methylsulfanyl-N(6)-dimethylallyladenosine(37) in tRNA + (sulfur carrier)-H + 5'-deoxyadenosine + L-methionine + A + S-adenosyl-L-homocysteine + 2 H(+). Catalyzes the methylthiolation of N6-(dimethylallyl)adenosine (i(6)A), leading to the formation of 2-methylthio-N6-(dimethylallyl)adenosine (ms(2)i(6)A) at position 37 in tRNAs that read codons beginning with uridine. This is tRNA-2-methylthio-N(6)-dimethylallyladenosine synthase from Clostridioides difficile (strain 630) (Peptoclostridium difficile).